The following is a 300-amino-acid chain: Pleckstrin homology domain-containing family A member 3 (300 aa).

The PH domain maps to 1–93 (MEGVLYKWTN…WLVALGSSKA (93 aa)). Residues 1 to 100 (MEGVLYKWTN…SKACLTDTRT (100 aa)) are interaction with SACM1L. Positions 97-300 (DTRTKKEKEI…SEDTLPSFSS (204 aa)) are interaction with VAPA and VAPB. A disordered region spans residues 197 to 300 (PVSPSPVQMM…SEDTLPSFSS (104 aa)). Phosphoserine occurs at positions 236 and 244. Basic and acidic residues predominate over residues 279 to 290 (EESRLMAKKQSE).

In terms of assembly, interacts with GTP-bound ARF1. Interacts with SACM1L and VAPA and/or VAPB to form a ternary complex. In terms of tissue distribution, widely expressed.

The protein resides in the golgi apparatus. Its subcellular location is the trans-Golgi network membrane. In terms of biological role, plays a role in regulation of vesicular cargo transport from the trans-Golgi network (TGN) to the plasma membrane. Regulates Golgi phosphatidylinositol 4-phosphate (PtdIns(4)P) levels and activates the PtdIns(4)P phosphatase activity of SACM1L when it binds PtdIns(4)P in 'trans' configuration. Binds preferentially to PtdIns(4)P. Negatively regulates APOB secretion from hepatocytes. The protein is Pleckstrin homology domain-containing family A member 3 (PLEKHA3) of Homo sapiens (Human).